A 750-amino-acid polypeptide reads, in one-letter code: MIIDRLLQRSHSHLPILQATFGLERESLRIHQPTQRVAQTPHPKTLGSRNYHPYIQTDYSEPQLELITPIAKDSQEAIRFLKAISDVAGRSINHDEYLWPLSMPPKVREEDIQIAQLEDAFEYDYRKYLEKTYGKLIQSISGIHYNLGLGQELLTSLFELSQADNAIDFQNQLYMKLSQNFLRYRWLLTYLYGASPVAEEDFLDQKLNNPVRSLRNSHLGYVNHKDIRISYTSLKDYVNDLENAVKSGQLIAEKEFYSPVRLRGSKACRNYLEKGITYLEFRTFDLNPFSPIGITQETVDTVHLFLLALLWIDSSSHIDQDIKEANRLNDLIALSHPLEKLPNQAPVSDLVDAMQSVIQHFNLSPYYQDLLESVKRQIQSPELTVAGQLLEMIEGLSLETFGQRQGQIYHDYAWEAPYALKGYETMELSTQLLLFDVIQKGVNFEVLDEQDQFLKLWHNSHIEYVKNGNMTSKDNYIVPLAMANKVVTKKILDEKHFPTPFGDEFTDRKEALNYFSQIQDKPIVVKPKSTNFGLGISIFKTSANLASYEKAIDIAFTEDSAILVEEYIEGTEYRFFVLEGDCIAVLLRVAANVVGDGIHTISQLVKLKNQNPLRGYDHRSPLEVIELGEVEQLMLEQQGYTVNSIPPEGTKIELRRNSNISTGGDSIDVTNTMDPTYKQLAAEMAEAMGAWVCGVDLIIPNATQAYSKDKKNATCIELNFNPLMYMHTYCQEGPGQSITPRILAKLFPEL.

The glutamate--cysteine ligase stretch occupies residues 1 to 333; that stretch reads MIIDRLLQRS…EANRLNDLIA (333 aa). The interval 32 to 51 is disordered; sequence QPTQRVAQTPHPKTLGSRNY. The 259-residue stretch at 489–747 folds into the ATP-grasp domain; sequence KKILDEKHFP…ITPRILAKLF (259 aa). 516–574 lines the ATP pocket; that stretch reads SQIQDKPIVVKPKSTNFGLGISIFKTSANLASYEKAIDIAFTEDSAILVEEYIEGTEYR. 3 residues coordinate Mg(2+): Asp696, Glu717, and Asn719. 3 residues coordinate Mn(2+): Asp696, Glu717, and Asn719.

The protein in the N-terminal section; belongs to the glutamate--cysteine ligase type 1 family. Type 2 subfamily. Monomer. Requires Mg(2+) as cofactor. It depends on Mn(2+) as a cofactor.

The enzyme catalyses L-cysteine + L-glutamate + ATP = gamma-L-glutamyl-L-cysteine + ADP + phosphate + H(+). It carries out the reaction gamma-L-glutamyl-L-cysteine + glycine + ATP = glutathione + ADP + phosphate + H(+). It functions in the pathway sulfur metabolism; glutathione biosynthesis; glutathione from L-cysteine and L-glutamate: step 1/2. It participates in sulfur metabolism; glutathione biosynthesis; glutathione from L-cysteine and L-glutamate: step 2/2. In terms of biological role, synthesizes glutathione from L-glutamate and L-cysteine via gamma-L-glutamyl-L-cysteine. The sequence is that of Glutathione biosynthesis bifunctional protein GshAB from Streptococcus agalactiae serotype III (strain NEM316).